A 322-amino-acid chain; its full sequence is Thymidylate synthase (322 aa).

DUMP-binding positions include Arg-25 and 184–185 (RR). The active-site Nucleophile is the Cys-204. Residues 224 to 227 (RSGD), Asn-235, and 265 to 267 (HIY) contribute to the dUMP site. Asp-227 serves as a coordination point for (6R)-5,10-methylene-5,6,7,8-tetrahydrofolate. A (6R)-5,10-methylene-5,6,7,8-tetrahydrofolate-binding site is contributed by Ala-321.

The protein belongs to the thymidylate synthase family. Bacterial-type ThyA subfamily. Homodimer.

The protein resides in the cytoplasm. The enzyme catalyses dUMP + (6R)-5,10-methylene-5,6,7,8-tetrahydrofolate = 7,8-dihydrofolate + dTMP. The protein operates within pyrimidine metabolism; dTTP biosynthesis. Functionally, catalyzes the reductive methylation of 2'-deoxyuridine-5'-monophosphate (dUMP) to 2'-deoxythymidine-5'-monophosphate (dTMP) while utilizing 5,10-methylenetetrahydrofolate (mTHF) as the methyl donor and reductant in the reaction, yielding dihydrofolate (DHF) as a by-product. This enzymatic reaction provides an intracellular de novo source of dTMP, an essential precursor for DNA biosynthesis. This chain is Thymidylate synthase, found in Leuconostoc mesenteroides subsp. mesenteroides (strain ATCC 8293 / DSM 20343 / BCRC 11652 / CCM 1803 / JCM 6124 / NCDO 523 / NBRC 100496 / NCIMB 8023 / NCTC 12954 / NRRL B-1118 / 37Y).